Consider the following 571-residue polypeptide: Potassium-transporting ATPase potassium-binding subunit (571 aa).

12 helical membrane passes run 5–25 (LAAGLQVAFVLAVLAVAYVPV), 60–80 (YGYAGSVLGFSTASVLFLYAL), 86–106 (VLPLSGDLSGVSPAVAFNTAV), 131–151 (GLAVQNFVSAAVGMAVAVALI), 177–197 (ILLPFSFVIALILLSQGVIQS), 247–267 (PTPVSNIVEILAILLIPVSLT), 291–311 (LTLLAVMGILWGSLLAVTLAA), 334–354 (FGIPGTALFAVSTTGTSTGAV), 386–406 (GLYGILVLALIAVFVGGLLVG), 425–445 (ALSVLVMPALVLIGTGITVIL), 498–518 (ALGLCMLFGRFLPIIFVLALA), and 547–567 (GTVVLVAALTFFPALALGPIA).

Belongs to the KdpA family. As to quaternary structure, the system is composed of three essential subunits: KdpA, KdpB and KdpC.

The protein localises to the cell membrane. Part of the high-affinity ATP-driven potassium transport (or Kdp) system, which catalyzes the hydrolysis of ATP coupled with the electrogenic transport of potassium into the cytoplasm. This subunit binds the extracellular potassium ions and delivers the ions to the membrane domain of KdpB through an intramembrane tunnel. The protein is Potassium-transporting ATPase potassium-binding subunit of Rhodococcus jostii (strain RHA1).